Here is a 505-residue protein sequence, read N- to C-terminus: Peroxisome proliferator-activated receptor gamma (505 aa).

Positions 1–26 (MGETLGDSLIDPESDSFADTLSASTS) are disordered. The segment covering 17–26 (FADTLSASTS) has biased composition (polar residues). Position 112 is a phosphoserine; by MAPK (Ser112). The nuclear receptor DNA-binding region spans 136-210 (AIECRVCGDK…VGMSHNAIRF (75 aa)). 2 NR C4-type zinc fingers span residues 139–159 (CRVC…CEGC) and 176–198 (CDLN…FQKC). An interaction with FAM120B region spans residues 205 to 280 (HNAIRFGRMP…DKSPFVIYDM (76 aa)). In terms of domain architecture, NR LBD spans 238–503 (DLRALAKHLY…HPLLQEIYKD (266 aa)). Lys252 participates in a covalent cross-link: Glycyl lysine isopeptide (Lys-Gly) (interchain with G-Cter in ubiquitin). Positions 495–503 (PLLQEIYKD) match the 9aaTAD motif.

This sequence belongs to the nuclear hormone receptor family. NR1 subfamily. In terms of assembly, interacts with FOXO1 (acetylated form). Heterodimer with other nuclear receptors, such as RXRA. The heterodimer with the retinoic acid receptor RXRA is called adipocyte-specific transcription factor ARF6. Interacts with NCOA6 coactivator, leading to a strong increase in transcription of target genes. Interacts with coactivator PPARBP, leading to a mild increase in transcription of target genes. Interacts with NOCA7 in a ligand-inducible manner. Interacts with NCOA1 and NCOA2 LXXLL motifs. Interacts with ASXL1, ASXL2, DNTTIP2, FAM120B, MAP2K1/MEK1, NR0B2, PDPK1, PRDM16, PRMT2 and TGFB1I1. Interacts (when activated by agonist) with PPP5C. Interacts with HELZ2 and THRAP3; the interaction stimulates the transcriptional activity of PPARG. Interacts with PER2, the interaction is ligand dependent and blocks PPARG recruitment to target promoters. Interacts with NOCT. Interacts with ACTN4. Interacts (when in the liganded conformation) with GPS2. Interacts with CRY1 and CRY2 in a ligand-dependent manner. In the absence of hormonal ligand, interacts with TACC1. In macrophages, interacts with PAQR3 and STUB1; the interactions promote PPARG poylubiquitination and STUB1-mediated degradation. Phosphorylated at basal conditions and dephosphorylated when treated with the ligand. May be dephosphorylated by PPP5C. The phosphorylated form may be inactive and dephosphorylation induces adipogenic activity. In terms of processing, ubiquitinated by E3 ubiquitin-protein ligase complex containing FBXO9; leading to proteasomal degradation. Ubiquitinated at Lys-252 by TRIM55 leading to proteasomal degradation. Ubiquitinated by E3 ubiquitin-protein ligase STUB1/CHIP; leading to proteasomal degradation.

Its subcellular location is the nucleus. It localises to the cytoplasm. With respect to regulation, PDPK1 activates its transcriptional activity independently of its kinase activity. In terms of biological role, nuclear receptor that binds peroxisome proliferators such as hypolipidemic drugs and fatty acids. Once activated by a ligand, the nuclear receptor binds to DNA specific PPAR response elements (PPRE) and modulates the transcription of its target genes, such as acyl-CoA oxidase. It therefore controls the peroxisomal beta-oxidation pathway of fatty acids. Key regulator of adipocyte differentiation and glucose homeostasis. ARF6 acts as a key regulator of the tissue-specific adipocyte P2 (aP2) enhancer. Acts as a critical regulator of gut homeostasis by suppressing NF-kappa-B-mediated pro-inflammatory responses. Plays a role in the regulation of cardiovascular circadian rhythms by regulating the transcription of BMAL1 in the blood vessels. The chain is Peroxisome proliferator-activated receptor gamma (PPARG) from Canis lupus familiaris (Dog).